The chain runs to 235 residues: Lipoprotein-releasing system ATP-binding protein LolD 1 (235 aa).

The 230-residue stretch at 5–234 folds into the ABC transporter domain; sequence FEARGITKSY…DGRLQLCTPL (230 aa). 42–49 contacts ATP; it reads GASGSGKT.

Belongs to the ABC transporter superfamily. Lipoprotein translocase (TC 3.A.1.125) family. In terms of assembly, the complex is composed of two ATP-binding proteins (LolD) and two transmembrane proteins (LolC and LolE).

It localises to the cell inner membrane. In terms of biological role, part of the ABC transporter complex LolCDE involved in the translocation of mature outer membrane-directed lipoproteins, from the inner membrane to the periplasmic chaperone, LolA. Responsible for the formation of the LolA-lipoprotein complex in an ATP-dependent manner. In Chlorobium luteolum (strain DSM 273 / BCRC 81028 / 2530) (Pelodictyon luteolum), this protein is Lipoprotein-releasing system ATP-binding protein LolD 1.